The sequence spans 364 residues: Chorismate synthase (364 aa).

Arg-48 contributes to the NADP(+) binding site. FMN is bound by residues 131–133 (RAS), 243–244 (NA), Gly-288, 303–307 (KPTSS), and Arg-329.

This sequence belongs to the chorismate synthase family. In terms of assembly, homotetramer. FMNH2 is required as a cofactor.

It catalyses the reaction 5-O-(1-carboxyvinyl)-3-phosphoshikimate = chorismate + phosphate. Its pathway is metabolic intermediate biosynthesis; chorismate biosynthesis; chorismate from D-erythrose 4-phosphate and phosphoenolpyruvate: step 7/7. Catalyzes the anti-1,4-elimination of the C-3 phosphate and the C-6 proR hydrogen from 5-enolpyruvylshikimate-3-phosphate (EPSP) to yield chorismate, which is the branch point compound that serves as the starting substrate for the three terminal pathways of aromatic amino acid biosynthesis. This reaction introduces a second double bond into the aromatic ring system. The protein is Chorismate synthase of Bartonella bacilliformis (strain ATCC 35685 / KC583 / Herrer 020/F12,63).